We begin with the raw amino-acid sequence, 200 residues long: NADH-quinone oxidoreductase subunit B (200 aa).

[4Fe-4S] cluster-binding residues include Cys-78, Cys-79, Cys-144, and Cys-174.

This sequence belongs to the complex I 20 kDa subunit family. In terms of assembly, NDH-1 is composed of 14 different subunits. Subunits NuoB, C, D, E, F, and G constitute the peripheral sector of the complex. [4Fe-4S] cluster is required as a cofactor.

The protein resides in the cell membrane. The enzyme catalyses a quinone + NADH + 5 H(+)(in) = a quinol + NAD(+) + 4 H(+)(out). Functionally, NDH-1 shuttles electrons from NADH, via FMN and iron-sulfur (Fe-S) centers, to quinones in the respiratory chain. The immediate electron acceptor for the enzyme in this species is believed to be ubiquinone. Couples the redox reaction to proton translocation (for every two electrons transferred, four hydrogen ions are translocated across the cytoplasmic membrane), and thus conserves the redox energy in a proton gradient. This Dehalococcoides mccartyi (strain ATCC BAA-2266 / KCTC 15142 / 195) (Dehalococcoides ethenogenes (strain 195)) protein is NADH-quinone oxidoreductase subunit B.